Consider the following 335-residue polypeptide: Nucleoid-associated protein PC1_1634 (335 aa).

The protein belongs to the YejK family.

It localises to the cytoplasm. The protein resides in the nucleoid. This is Nucleoid-associated protein PC1_1634 from Pectobacterium carotovorum subsp. carotovorum (strain PC1).